The chain runs to 116 residues: Large ribosomal subunit protein uL18 (116 aa).

Belongs to the universal ribosomal protein uL18 family. In terms of assembly, part of the 50S ribosomal subunit; part of the 5S rRNA/L5/L18/L25 subcomplex. Contacts the 5S and 23S rRNAs.

In terms of biological role, this is one of the proteins that bind and probably mediate the attachment of the 5S RNA into the large ribosomal subunit, where it forms part of the central protuberance. The sequence is that of Large ribosomal subunit protein uL18 from Azotobacter vinelandii (strain DJ / ATCC BAA-1303).